A 294-amino-acid polypeptide reads, in one-letter code: 4-hydroxy-tetrahydrodipicolinate synthase (294 aa).

Thr47 serves as a coordination point for pyruvate. Tyr135 functions as the Proton donor/acceptor in the catalytic mechanism. Lys163 (schiff-base intermediate with substrate) is an active-site residue. Ile206 provides a ligand contact to pyruvate.

This sequence belongs to the DapA family. As to quaternary structure, homodimer.

The protein localises to the cytoplasm. The enzyme catalyses L-aspartate 4-semialdehyde + pyruvate = (2S,4S)-4-hydroxy-2,3,4,5-tetrahydrodipicolinate + H2O + H(+). The protein operates within amino-acid biosynthesis; L-lysine biosynthesis via DAP pathway; (S)-tetrahydrodipicolinate from L-aspartate: step 3/4. Its function is as follows. Catalyzes the condensation of (S)-aspartate-beta-semialdehyde [(S)-ASA] and pyruvate to 4-hydroxy-tetrahydrodipicolinate (HTPA). The sequence is that of 4-hydroxy-tetrahydrodipicolinate synthase from Staphylococcus epidermidis (strain ATCC 35984 / DSM 28319 / BCRC 17069 / CCUG 31568 / BM 3577 / RP62A).